The following is a 538-amino-acid chain: MVKAKGRAKEFQDPDEPITKDYDPEADVDVSEHGSGSEDSEDENAGTEHYVSVGKSKLRKSEGLSLGPQYRGSRVSRDALEEESASEEDDEEGSGDEEFDDPETADLERDAAEANDSEISSDNALGESDEERFKDYTFRASSKPNKPLSKRAKAADYMSSSDNEGAELGGSDSEDEEMDDGLDALVDGEGDSDDESDENDDEEGSGDDEEDDEDDSESDEEDSKAKAQNAKPMMAALSTQPDVDKGLAIRQQRKAYDGLLNMRIRLQKALIAANTFEALDSNPEPESEPYEAAEEAAIKLLNTISSLKDNFGPSHAGEKRKRELDVSMTTSQIWEQMQAEEERAIKSREDRLEKWSRKVQSVNVTGPKGLEGRNKTLISALRDQLINPDNRLAKRSRVPRSCAPAQAAKGVSEDNNIYDDADFYQVLLKELVDQRTVEGSSGAGAGDAVPTVVLTASKDVKNRKNVDRKASKGRKMRFTVHEKMQNFMAPEDRRAWEQGAIDRFFGTLFGRKMQLNEDESDDDMDVDVEEAGLRLFRN.

The segment at methionine 1 to threonine 239 is disordered. Residues arginine 7 to aspartate 23 show a composition bias toward basic and acidic residues. 2 stretches are compositionally biased toward acidic residues: residues leucine 80–alanine 105 and aspartate 172–aspartate 222. Residues tyrosine 290–asparagine 363 are a coiled coil.

The protein belongs to the AATF family.

The protein localises to the nucleus. The protein resides in the nucleolus. The sequence is that of Protein BFR2 (BFR2) from Gibberella zeae (strain ATCC MYA-4620 / CBS 123657 / FGSC 9075 / NRRL 31084 / PH-1) (Wheat head blight fungus).